The sequence spans 79 residues: Translational regulator CsrA (79 aa).

It belongs to the CsrA/RsmA family. In terms of assembly, homodimer; the beta-strands of each monomer intercalate to form a hydrophobic core, while the alpha-helices form wings that extend away from the core.

It localises to the cytoplasm. Its function is as follows. A translational regulator that binds mRNA to regulate translation initiation and/or mRNA stability. Usually binds in the 5'-UTR at or near the Shine-Dalgarno sequence preventing ribosome-binding, thus repressing translation. Its main target seems to be the major flagellin gene, while its function is anatagonized by FliW. In Syntrophus aciditrophicus (strain SB), this protein is Translational regulator CsrA.